Reading from the N-terminus, the 879-residue chain is Phosphoenolpyruvate carboxylase (879 aa).

Residues His-138 and Lys-545 contribute to the active site.

The protein belongs to the PEPCase type 1 family. Requires Mg(2+) as cofactor.

The catalysed reaction is oxaloacetate + phosphate = phosphoenolpyruvate + hydrogencarbonate. Its function is as follows. Forms oxaloacetate, a four-carbon dicarboxylic acid source for the tricarboxylic acid cycle. This is Phosphoenolpyruvate carboxylase from Haemophilus influenzae (strain PittEE).